The following is a 704-amino-acid chain: Elongation factor G 1 (704 aa).

In terms of domain architecture, tr-type G spans Glu-8–Ala-291. GTP contacts are provided by residues Ala-17–Thr-24, Asp-88–His-92, and Asn-142–Asp-145.

This sequence belongs to the TRAFAC class translation factor GTPase superfamily. Classic translation factor GTPase family. EF-G/EF-2 subfamily.

It localises to the cytoplasm. Its function is as follows. Catalyzes the GTP-dependent ribosomal translocation step during translation elongation. During this step, the ribosome changes from the pre-translocational (PRE) to the post-translocational (POST) state as the newly formed A-site-bound peptidyl-tRNA and P-site-bound deacylated tRNA move to the P and E sites, respectively. Catalyzes the coordinated movement of the two tRNA molecules, the mRNA and conformational changes in the ribosome. The polypeptide is Elongation factor G 1 (Burkholderia pseudomallei (strain 1710b)).